The primary structure comprises 202 residues: Adapter protein MecA 2 (202 aa).

The protein belongs to the MecA family. As to quaternary structure, homodimer.

Functionally, enables the recognition and targeting of unfolded and aggregated proteins to the ClpC protease or to other proteins involved in proteolysis. Acts negatively in the development of competence by binding ComK and recruiting it to the ClpCP protease. When overexpressed, inhibits sporulation. Also involved in Spx degradation by ClpC. The protein is Adapter protein MecA 2 (mecA2) of Bacillus cereus (strain ATCC 14579 / DSM 31 / CCUG 7414 / JCM 2152 / NBRC 15305 / NCIMB 9373 / NCTC 2599 / NRRL B-3711).